The primary structure comprises 452 residues: Bifunctional protein GlmU (452 aa).

The pyrophosphorylase stretch occupies residues 1-224; that stretch reads MNIVILAAGQ…EWEVLGVNSK (224 aa). Residues 6-9, Lys20, Gln71, 76-77, 98-100, Gly134, Glu149, Asn164, and Asn222 contribute to the UDP-N-acetyl-alpha-D-glucosamine site; these read LAAG, GT, and YGD. Residue Asp100 participates in Mg(2+) binding. Asn222 provides a ligand contact to Mg(2+). The linker stretch occupies residues 225–245; it reads VQLAELERQHQLNLAGELLVA. Residues 246 to 452 are N-acetyltransferase; it reads GVRLADPARI…GWERPKKVKK (207 aa). 2 residues coordinate UDP-N-acetyl-alpha-D-glucosamine: Arg328 and Lys346. The active-site Proton acceptor is His358. Residues Tyr361 and Asn372 each contribute to the UDP-N-acetyl-alpha-D-glucosamine site. Acetyl-CoA contacts are provided by residues Ala375, 381 to 382, Ser400, Ala418, and Arg435; that span reads NY.

This sequence in the N-terminal section; belongs to the N-acetylglucosamine-1-phosphate uridyltransferase family. The protein in the C-terminal section; belongs to the transferase hexapeptide repeat family. In terms of assembly, homotrimer. It depends on Mg(2+) as a cofactor.

It is found in the cytoplasm. The catalysed reaction is alpha-D-glucosamine 1-phosphate + acetyl-CoA = N-acetyl-alpha-D-glucosamine 1-phosphate + CoA + H(+). It carries out the reaction N-acetyl-alpha-D-glucosamine 1-phosphate + UTP + H(+) = UDP-N-acetyl-alpha-D-glucosamine + diphosphate. It participates in nucleotide-sugar biosynthesis; UDP-N-acetyl-alpha-D-glucosamine biosynthesis; N-acetyl-alpha-D-glucosamine 1-phosphate from alpha-D-glucosamine 6-phosphate (route II): step 2/2. Its pathway is nucleotide-sugar biosynthesis; UDP-N-acetyl-alpha-D-glucosamine biosynthesis; UDP-N-acetyl-alpha-D-glucosamine from N-acetyl-alpha-D-glucosamine 1-phosphate: step 1/1. It functions in the pathway bacterial outer membrane biogenesis; LPS lipid A biosynthesis. Functionally, catalyzes the last two sequential reactions in the de novo biosynthetic pathway for UDP-N-acetylglucosamine (UDP-GlcNAc). The C-terminal domain catalyzes the transfer of acetyl group from acetyl coenzyme A to glucosamine-1-phosphate (GlcN-1-P) to produce N-acetylglucosamine-1-phosphate (GlcNAc-1-P), which is converted into UDP-GlcNAc by the transfer of uridine 5-monophosphate (from uridine 5-triphosphate), a reaction catalyzed by the N-terminal domain. In Dechloromonas aromatica (strain RCB), this protein is Bifunctional protein GlmU.